The following is a 493-amino-acid chain: Glycerol kinase (493 aa).

Residue T13 participates in ADP binding. Residues T13, T14, and S15 each contribute to the ATP site. T13 provides a ligand contact to sn-glycerol 3-phosphate. Residue R17 participates in ADP binding. Sn-glycerol 3-phosphate is bound by residues R83, E84, Y135, and D244. Glycerol-binding residues include R83, E84, Y135, D244, and Q245. T266 and G309 together coordinate ADP. 4 residues coordinate ATP: T266, G309, Q313, and G410. ADP-binding residues include G410 and N414.

Belongs to the FGGY kinase family.

The catalysed reaction is glycerol + ATP = sn-glycerol 3-phosphate + ADP + H(+). Its pathway is polyol metabolism; glycerol degradation via glycerol kinase pathway; sn-glycerol 3-phosphate from glycerol: step 1/1. Inhibited by fructose 1,6-bisphosphate (FBP). Its function is as follows. Key enzyme in the regulation of glycerol uptake and metabolism. Catalyzes the phosphorylation of glycerol to yield sn-glycerol 3-phosphate. In Shewanella pealeana (strain ATCC 700345 / ANG-SQ1), this protein is Glycerol kinase.